Consider the following 785-residue polypeptide: Toll-like receptor 2 (785 aa).

The first 17 residues, 1–17 (MSRVLWTLWVLGAVTNL), serve as a signal peptide directing secretion. The Extracellular segment spans residues 18–589 (SKEEAPDQSS…RLSVSECHRT (572 aa)). Cys-31 and Cys-37 are oxidised to a cystine. LRR repeat units follow at residues 54-77 (AVRS…RDCV), 78-101 (NLKA…LSLW), 102-125 (SLEH…RPLS), 126-150 (SLKF…SQLT), 151-175 (NLRI…AGLT), 176-199 (FLEE…KSIQ), 200-223 (NISY…DLSS), 224-250 (SLKH…ETHT), 251-278 (LVKK…NYVS), 279-308 (GVLE…KNIG), 309-337 (QIET…SLTE), 338-361 (DVKR…QHLK), 362-388 (SLEY…DAWP), 389-414 (SLQT…LTLK), 415-437 (NLTN…QWPE), 438-457 (KMKY…GCIP), 458-478 (KTLE…LNLP), 479-500 (QLKE…SLLP), and 501-524 (MLLV…DSFH). Asn-115 is a glycosylation site (N-linked (GlcNAc...) asparagine). N-linked (GlcNAc...) asparagine glycosylation is found at Asn-200 and Asn-246. Cys-354 and Cys-383 form a disulfide bridge. Asn-415 and Asn-443 each carry an N-linked (GlcNAc...) asparagine glycan. The cysteines at positions 433 and 455 are disulfide-linked. Residues 525 to 579 (TLKTLEAGGNNFICSCEFLSFTQEQQALAKVLIDWPANYLCDSPSHVRGQQVQDV) enclose the LRRCT domain. A helical membrane pass occupies residues 590–610 (ALVSGMCCALFLLILLTEVLC). Over 611-785 (HRFHGLWYMR…WLNLRTAIKS (175 aa)) the chain is Cytoplasmic. The TIR domain maps to 640-783 (VCYDAFVSYS…GFWLNLRTAI (144 aa)). Lys-755 participates in a covalent cross-link: Glycyl lysine isopeptide (Lys-Gly) (interchain with G-Cter in ubiquitin). The ATG16L1-binding motif motif lies at 762-779 (YLEWPTDDAQQEGFWLNL).

The protein belongs to the Toll-like receptor family. In terms of assembly, interacts with LY96, TLR1 and TLR6 (via extracellular domain). TLR2 seems to exist in heterodimers with either TLR1 or TLR6 before stimulation by the ligand. The heterodimers form bigger oligomers in response to their corresponding ligands as well as further heterotypic associations with other receptors such as CD14 and/or CD36. Binds MYD88 (via TIR domain). Interacts with TICAM1. Interacts with CNPY3. Interacts with ATG16L1. Interacts with PPP1R11. Interacts with TICAM2. Interacts with TIRAP. In terms of processing, ubiquitinated at Lys-755 by PPP1R11, leading to its degradation. Deubiquitinated by USP2. Post-translationally, glycosylation of Asn-443 is critical for secretion of the N-terminal ectodomain of TLR2.

The protein localises to the membrane. The protein resides in the cytoplasmic vesicle. Its subcellular location is the phagosome membrane. It is found in the membrane raft. Cooperates with LY96 to mediate the innate immune response to bacterial lipoproteins and other microbial cell wall components. Cooperates with TLR1 or TLR6 to mediate the innate immune response to bacterial lipoproteins or lipopeptides. Acts via MYD88 and TRAF6, leading to NF-kappa-B activation, cytokine secretion and the inflammatory response. May also promote apoptosis in response to lipoproteins. Forms activation clusters composed of several receptors depending on the ligand, these clusters trigger signaling from the cell surface and subsequently are targeted to the Golgi in a lipid-raft dependent pathway. Forms the cluster TLR2:TLR6:CD14:CD36 in response to diacylated lipopeptides and TLR2:TLR1:CD14 in response to triacylated lipopeptides. In Canis lupus familiaris (Dog), this protein is Toll-like receptor 2 (TLR2).